We begin with the raw amino-acid sequence, 407 residues long: Imidazolonepropionase (407 aa).

Fe(3+) is bound by residues His68 and His70. Zn(2+)-binding residues include His68 and His70. 4-imidazolone-5-propanoate contacts are provided by Arg77, Tyr140, and His173. Tyr140 serves as a coordination point for N-formimidoyl-L-glutamate. His238 lines the Fe(3+) pocket. Zn(2+) is bound at residue His238. A 4-imidazolone-5-propanoate-binding site is contributed by Gln241. Asp313 is a Fe(3+) binding site. Asp313 provides a ligand contact to Zn(2+). N-formimidoyl-L-glutamate is bound by residues Asn315 and Gly317. Residue Thr318 coordinates 4-imidazolone-5-propanoate.

It belongs to the metallo-dependent hydrolases superfamily. HutI family. Requires Zn(2+) as cofactor. Fe(3+) is required as a cofactor.

The protein resides in the cytoplasm. It carries out the reaction 4-imidazolone-5-propanoate + H2O = N-formimidoyl-L-glutamate. It participates in amino-acid degradation; L-histidine degradation into L-glutamate; N-formimidoyl-L-glutamate from L-histidine: step 3/3. In terms of biological role, catalyzes the hydrolytic cleavage of the carbon-nitrogen bond in imidazolone-5-propanoate to yield N-formimidoyl-L-glutamate. It is the third step in the universal histidine degradation pathway. The polypeptide is Imidazolonepropionase (Burkholderia cenocepacia (strain HI2424)).